Reading from the N-terminus, the 607-residue chain is Glutamyl-tRNA(Gln) amidotransferase subunit E (607 aa).

The interval 399 to 428 is disordered; it reads GVPEETRGANPDGTTRFLRPRPGAARMYPE.

The protein belongs to the GatB/GatE family. GatE subfamily. In terms of assembly, heterodimer of GatD and GatE.

The catalysed reaction is L-glutamyl-tRNA(Gln) + L-glutamine + ATP + H2O = L-glutaminyl-tRNA(Gln) + L-glutamate + ADP + phosphate + H(+). Functionally, allows the formation of correctly charged Gln-tRNA(Gln) through the transamidation of misacylated Glu-tRNA(Gln) in organisms which lack glutaminyl-tRNA synthetase. The reaction takes place in the presence of glutamine and ATP through an activated gamma-phospho-Glu-tRNA(Gln). The GatDE system is specific for glutamate and does not act on aspartate. The chain is Glutamyl-tRNA(Gln) amidotransferase subunit E from Pyrobaculum neutrophilum (strain DSM 2338 / JCM 9278 / NBRC 100436 / V24Sta) (Thermoproteus neutrophilus).